The sequence spans 274 residues: Endonuclease 8-like L720 (274 aa).

The FPG-type; degenerate zinc-finger motif lies at 241 to 274 (RIYRKSLCPLGHKTIRKKIGLRNRMTTWCPVCQL).

The protein belongs to the FPG family.

This chain is Endonuclease 8-like L720, found in Acanthamoeba polyphaga mimivirus (APMV).